The sequence spans 238 residues: ATP synthase subunit a (238 aa).

The next 4 helical transmembrane spans lie at Leu17 to Cys37, Ile80 to Ile100, Asp112 to Ile132, and Ile194 to Ile214.

It belongs to the ATPase A chain family. F-type ATPases have 2 components, CF(1) - the catalytic core - and CF(0) - the membrane proton channel. CF(1) has five subunits: alpha(3), beta(3), gamma(1), delta(1), epsilon(1). CF(0) has three main subunits: a(1), b(2) and c(9-12). The alpha and beta chains form an alternating ring which encloses part of the gamma chain. CF(1) is attached to CF(0) by a central stalk formed by the gamma and epsilon chains, while a peripheral stalk is formed by the delta and b chains.

The protein localises to the cell membrane. Key component of the proton channel; it plays a direct role in the translocation of protons across the membrane. In Listeria welshimeri serovar 6b (strain ATCC 35897 / DSM 20650 / CCUG 15529 / CIP 8149 / NCTC 11857 / SLCC 5334 / V8), this protein is ATP synthase subunit a.